The following is a 156-amino-acid chain: Putative pre-16S rRNA nuclease (156 aa).

The protein belongs to the YqgF nuclease family.

The protein resides in the cytoplasm. Its function is as follows. Could be a nuclease involved in processing of the 5'-end of pre-16S rRNA. The chain is Putative pre-16S rRNA nuclease from Albidiferax ferrireducens (strain ATCC BAA-621 / DSM 15236 / T118) (Rhodoferax ferrireducens).